Here is a 543-residue protein sequence, read N- to C-terminus: Gap junction alpha-10 protein (543 aa).

Topologically, residues 1–16 (MGDWNLLGGILEEVHS) are cytoplasmic. The helical transmembrane segment at 17–37 (HSTIVGKIWLTILFIFRMLVL) threads the bilayer. Residues 38–76 (RVAAEDVWDDEQSAFACNTRQPGCNNICYDDAFPISLIR) lie on the Extracellular side of the membrane. A helical transmembrane segment spans residues 77–97 (FWVLQIIFVSSPSLVYMGHAL). The Cytoplasmic portion of the chain corresponds to 98–165 (YRLRAFEKDR…TYVLHILTRS (68 aa)). Residues 166–186 (VLEVGFMIGQYILYGFQMHPL) form a helical membrane-spanning segment. The Extracellular portion of the chain corresponds to 187–209 (YKCTQPPCPNAVDCFVSRPTEKT). Residues 210-230 (IFMLFMHSIAAISLLLNILEI) form a helical membrane-spanning segment. Residues 231-543 (FHLGIRKIMR…HSIHSVKFNS (313 aa)) are Cytoplasmic-facing. Disordered stretches follow at residues 306–359 (PQPR…SSFG) and 379–424 (PSFA…DRSR). A compositionally biased stretch (basic and acidic residues) spans 317 to 328 (NGKKDWSEKDQH). Over residues 344-359 (AGNQHLGQQSDHSSFG) the composition is skewed to polar residues. Positions 400 to 413 (TDLHSHCRDSEGSM) are enriched in basic and acidic residues.

It belongs to the connexin family. Alpha-type (group II) subfamily. A connexon is composed of a hexamer of connexins. As to expression, expressed in skeletal muscle and heart.

It localises to the cell membrane. The protein localises to the cell junction. It is found in the gap junction. In terms of biological role, one gap junction consists of a cluster of closely packed pairs of transmembrane channels, the connexons, through which materials of low MW diffuse from one cell to a neighboring cell. Involved in tracer coupling between horizontal cells of the retina. May play a role in the regulation of horizontal cell patterning. In Homo sapiens (Human), this protein is Gap junction alpha-10 protein (GJA10).